Consider the following 87-residue polypeptide: Phosphoribosyl-ATP pyrophosphatase (87 aa).

Belongs to the PRA-PH family.

The protein resides in the cytoplasm. The enzyme catalyses 1-(5-phospho-beta-D-ribosyl)-ATP + H2O = 1-(5-phospho-beta-D-ribosyl)-5'-AMP + diphosphate + H(+). It participates in amino-acid biosynthesis; L-histidine biosynthesis; L-histidine from 5-phospho-alpha-D-ribose 1-diphosphate: step 2/9. The sequence is that of Phosphoribosyl-ATP pyrophosphatase from Corynebacterium diphtheriae (strain ATCC 700971 / NCTC 13129 / Biotype gravis).